A 281-amino-acid chain; its full sequence is sn-glycerol-3-phosphate transport system permease protein UgpE (281 aa).

6 consecutive transmembrane segments (helical) span residues 16 to 36 (LILG…AATL), 85 to 105 (FSIT…IVWF), 113 to 133 (FFWM…FPTV), 142 to 162 (LDSY…TFLF), 202 to 222 (ALFV…LLII), and 247 to 267 (WNSV…IVLV). Residues 77–268 (LLNSFVMAFS…IPPVVIVLVM (192 aa)) enclose the ABC transmembrane type-1 domain.

It belongs to the binding-protein-dependent transport system permease family. UgpAE subfamily. The complex is composed of two ATP-binding proteins (UgpC), two transmembrane proteins (UgpA and UgpE) and a solute-binding protein (UgpB).

The protein resides in the cell inner membrane. Part of the ABC transporter complex UgpBAEC involved in sn-glycerol-3-phosphate (G3P) import. Probably responsible for the translocation of the substrate across the membrane. This Shigella flexneri serotype 5b (strain 8401) protein is sn-glycerol-3-phosphate transport system permease protein UgpE (ugpE).